We begin with the raw amino-acid sequence, 507 residues long: ATP synthase subunit beta (507 aa).

The interval 1–22 is disordered; the sequence is MSSLANKAKSKGKSSKSKSNVN. Residue 183–190 participates in ATP binding; it reads GGAGVGKT.

This sequence belongs to the ATPase alpha/beta chains family. In terms of assembly, F-type ATPases have 2 components, CF(1) - the catalytic core - and CF(0) - the membrane proton channel. CF(1) has five subunits: alpha(3), beta(3), gamma(1), delta(1), epsilon(1). CF(0) has three main subunits: a(1), b(2) and c(9-12). The alpha and beta chains form an alternating ring which encloses part of the gamma chain. CF(1) is attached to CF(0) by a central stalk formed by the gamma and epsilon chains, while a peripheral stalk is formed by the delta and b chains.

The protein resides in the cell inner membrane. The enzyme catalyses ATP + H2O + 4 H(+)(in) = ADP + phosphate + 5 H(+)(out). Produces ATP from ADP in the presence of a proton gradient across the membrane. The catalytic sites are hosted primarily by the beta subunits. This is ATP synthase subunit beta from Ehrlichia canis (strain Jake).